The following is a 224-amino-acid chain: 7-cyano-7-deazaguanine synthase (224 aa).

10 to 20 (LSGGLDSATVV) contributes to the ATP binding site. Residues C189, C199, C202, and C205 each coordinate Zn(2+).

Belongs to the QueC family. Zn(2+) is required as a cofactor.

The catalysed reaction is 7-carboxy-7-deazaguanine + NH4(+) + ATP = 7-cyano-7-deazaguanine + ADP + phosphate + H2O + H(+). It participates in purine metabolism; 7-cyano-7-deazaguanine biosynthesis. Its function is as follows. Catalyzes the ATP-dependent conversion of 7-carboxy-7-deazaguanine (CDG) to 7-cyano-7-deazaguanine (preQ(0)). This is 7-cyano-7-deazaguanine synthase from Pseudomonas aeruginosa (strain LESB58).